The chain runs to 330 residues: Aspartate--ammonia ligase (330 aa).

The protein belongs to the class-II aminoacyl-tRNA synthetase family. AsnA subfamily.

Its subcellular location is the cytoplasm. It catalyses the reaction L-aspartate + NH4(+) + ATP = L-asparagine + AMP + diphosphate + H(+). It functions in the pathway amino-acid biosynthesis; L-asparagine biosynthesis; L-asparagine from L-aspartate (ammonia route): step 1/1. The sequence is that of Aspartate--ammonia ligase from Streptococcus agalactiae serotype III (strain NEM316).